A 931-amino-acid chain; its full sequence is Isoleucine--tRNA ligase (931 aa).

The 'HIGH' region signature appears at 58-68; that stretch reads PYANGHLHCGH. E559 contributes to the L-isoleucyl-5'-AMP binding site. The 'KMSKS' region signature appears at 600–604; it reads KLSKS. K603 contributes to the ATP binding site. Zn(2+) contacts are provided by C894, C897, C914, and C917.

The protein belongs to the class-I aminoacyl-tRNA synthetase family. IleS type 1 subfamily. In terms of assembly, monomer. Zn(2+) is required as a cofactor.

It localises to the cytoplasm. It carries out the reaction tRNA(Ile) + L-isoleucine + ATP = L-isoleucyl-tRNA(Ile) + AMP + diphosphate. In terms of biological role, catalyzes the attachment of isoleucine to tRNA(Ile). As IleRS can inadvertently accommodate and process structurally similar amino acids such as valine, to avoid such errors it has two additional distinct tRNA(Ile)-dependent editing activities. One activity is designated as 'pretransfer' editing and involves the hydrolysis of activated Val-AMP. The other activity is designated 'posttransfer' editing and involves deacylation of mischarged Val-tRNA(Ile). This Legionella pneumophila (strain Paris) protein is Isoleucine--tRNA ligase.